The sequence spans 115 residues: Non-specific lipid-transfer protein Cw18 (115 aa).

The N-terminal stretch at 1–25 (MARTAATKLALVALVAAMLLVAADA) is a signal peptide. 4 disulfides stabilise this stretch: Cys29–Cys77, Cys39–Cys54, Cys55–Cys97, and Cys75–Cys111.

This sequence belongs to the plant LTP family. Highly expressed in leaves and coleoptiles. No expression in roots.

Its function is as follows. Plant non-specific lipid-transfer proteins transfer phospholipids as well as galactolipids across membranes. May play a role in wax or cutin deposition in the cell walls of expanding epidermal cells and certain secretory tissues. The polypeptide is Non-specific lipid-transfer protein Cw18 (CW18) (Hordeum vulgare (Barley)).